A 217-amino-acid chain; its full sequence is Coiled-coil domain-containing protein 124-A (217 aa).

A disordered region spans residues 1 to 128; the sequence is MPKKFQGENT…HLEMPLEENV (128 aa). Composition is skewed to basic and acidic residues over residues 18-45, 52-74, and 95-128; these read RKAE…DDKH, RKED…QRLL, and TRAE…EENV. Residues 46 to 82 adopt a coiled-coil conformation; the sequence is VARKGQRKEDKEKKRLEQLERKKESQRLLDEEDSKMK.

This sequence belongs to the CCDC124 family. As to quaternary structure, associates with translationally inactive ribosomes in the nonrotated state.

It localises to the cytoplasm. It is found in the cytoskeleton. The protein resides in the microtubule organizing center. Its subcellular location is the centrosome. The protein localises to the midbody. Functionally, ribosome-binding protein involved in ribosome hibernation: associates with translationally inactive ribosomes and stabilizes the nonrotated conformation of the 80S ribosome, thereby promoting ribosome preservation and storage. The sequence is that of Coiled-coil domain-containing protein 124-A (ccdc124-a) from Xenopus laevis (African clawed frog).